The following is a 2255-amino-acid chain: Defense against restriction protein B (2255 aa).

In terms of domain architecture, Helicase ATP-binding spans 841-1126 (VRRLSEDGRG…YNMLSHVLPK (286 aa)). 854-861 (FGTGLGKT) contributes to the ATP binding site. The DEAH box motif lies at 1052–1055 (DEGH). Residues 1198–1234 (ELDEHQQDAPLTEEQLAAYEELRQQAEAAAKANNGVT) are a coiled coil. The 186-residue stretch at 1383–1568 (KLKRIICNAL…EMENADANDM (186 aa)) folds into the Helicase C-terminal domain. Residues 1617–1654 (HAAGEDVEVLTAELERSKAELEKTTAEVAKFKQAVMAK) adopt a coiled-coil conformation.

The protein belongs to the helicase family.

The protein localises to the virion. Functionally, capsid internal protein that is probably ejected along with the viral DNA and prevents degradation of viral DNA by the host EcoB and EcoK restriction-modification antiviral defense systems. This chain is Defense against restriction protein B, found in Escherichia phage P1 (Bacteriophage P1).